The chain runs to 468 residues: Shaggy-related protein kinase theta (468 aa).

2 disordered regions span residues 1–53 (MNVM…DQST) and 91–112 (HANR…CGTE). One can recognise a Protein kinase domain in the interval 134 to 418 (YMAQRVVGTG…ALEACAHPFF (285 aa)). Residues 140–148 (VGTGSFGVV) and Lys163 each bind ATP. The active-site Proton acceptor is the Asp259. Tyr294 carries the phosphotyrosine modification.

This sequence belongs to the protein kinase superfamily. CMGC Ser/Thr protein kinase family. GSK-3 subfamily. In terms of processing, autophosphorylated mainly on threonine and serine residues. In developing pollen.

The catalysed reaction is L-seryl-[protein] + ATP = O-phospho-L-seryl-[protein] + ADP + H(+). The enzyme catalyses L-threonyl-[protein] + ATP = O-phospho-L-threonyl-[protein] + ADP + H(+). In terms of biological role, may mediate extracellular signals to regulate transcription in differentiating cells. The protein is Shaggy-related protein kinase theta of Brassica napus (Rape).